A 102-amino-acid chain; its full sequence is MAKQKIRIRLKAYDHRVIDQSAEKIVETAKRSGADVSGPIPLPTEKSVYTIIRAVHMYKDSREQFEQRTHKRLIDIVNPTPKTVDALMGLNLPSGVDIEIKL.

This sequence belongs to the universal ribosomal protein uS10 family. As to quaternary structure, part of the 30S ribosomal subunit.

Functionally, involved in the binding of tRNA to the ribosomes. The chain is Small ribosomal subunit protein uS10 from Staphylococcus aureus (strain Mu3 / ATCC 700698).